We begin with the raw amino-acid sequence, 527 residues long: Peptide chain release factor 3 (527 aa).

Residues 9–278 (NKRRTFAIIS…GLTQWAPKPQ (270 aa)) form the tr-type G domain. GTP is bound by residues 18–25 (SHPDAGKT), 86–90 (DTPGH), and 140–143 (NKLD).

Belongs to the TRAFAC class translation factor GTPase superfamily. Classic translation factor GTPase family. PrfC subfamily.

It is found in the cytoplasm. Its function is as follows. Increases the formation of ribosomal termination complexes and stimulates activities of RF-1 and RF-2. It binds guanine nucleotides and has strong preference for UGA stop codons. It may interact directly with the ribosome. The stimulation of RF-1 and RF-2 is significantly reduced by GTP and GDP, but not by GMP. In Haemophilus influenzae (strain 86-028NP), this protein is Peptide chain release factor 3.